A 466-amino-acid polypeptide reads, in one-letter code: Asparagine--tRNA ligase (466 aa).

It belongs to the class-II aminoacyl-tRNA synthetase family. As to quaternary structure, homodimer.

Its subcellular location is the cytoplasm. The catalysed reaction is tRNA(Asn) + L-asparagine + ATP = L-asparaginyl-tRNA(Asn) + AMP + diphosphate + H(+). The chain is Asparagine--tRNA ligase from Sodalis glossinidius (strain morsitans).